Consider the following 443-residue polypeptide: ATP synthase subunit b-delta (443 aa).

An ATP synthase subunit b region spans residues 1 to 168; it reads MSTFIGQLIG…PSDAALDDAV (168 aa). A helical membrane pass occupies residues 4-24; sequence FIGQLIGFAVIVFLLVRFVVP. Residues 169-443 are ATP synthase subunit delta; sequence GSRMRSTSRE…LASAETQLPD (275 aa).

This sequence in the N-terminal section; belongs to the ATPase B chain family. The protein in the C-terminal section; belongs to the ATPase delta chain family. F-type ATPases have 2 components, F(1) - the catalytic core - and F(0) - the membrane proton channel. F(1) has five subunits: alpha(3), beta(3), gamma(1), delta(1), epsilon(1). F(0) has three main subunits: a(1), b(2) and c(10-14). The alpha and beta chains form an alternating ring which encloses part of the gamma chain. F(1) is attached to F(0) by a central stalk formed by the gamma and epsilon chains, while a peripheral stalk is formed by the delta and b chains.

It is found in the cell membrane. Its function is as follows. F(1)F(0) ATP synthase produces ATP from ADP in the presence of a proton or sodium gradient. F-type ATPases consist of two structural domains, F(1) containing the extramembraneous catalytic core and F(0) containing the membrane proton channel, linked together by a central stalk and a peripheral stalk. During catalysis, ATP synthesis in the catalytic domain of F(1) is coupled via a rotary mechanism of the central stalk subunits to proton translocation. In terms of biological role, this fusion protein includes a component of the F(0) channel (subunit b) and of the F(1) subunit (subunit delta). Two copies of subunit b and one of delta together form the peripheral 'stator' stalk which links F(1) to F(0). The sequence is that of ATP synthase subunit b-delta (atpFH) from Mycobacterium sp. (strain JLS).